The following is a 1046-amino-acid chain: Probable inorganic carbon transporter subunit DabA1 (1046 aa).

Zn(2+) is bound by residues C462, D464, H721, and C736.

It belongs to the inorganic carbon transporter (TC 9.A.2) DabA family. Forms a complex with DabB1. It depends on Zn(2+) as a cofactor.

The protein localises to the cell inner membrane. In terms of biological role, part of an energy-coupled inorganic carbon pump. This is Probable inorganic carbon transporter subunit DabA1 from Halothiobacillus neapolitanus (strain ATCC 23641 / c2) (Thiobacillus neapolitanus).